The following is a 509-amino-acid chain: Putative ATP-dependent RNA helicase QP509L (509 aa).

A Helicase ATP-binding domain is found at 110-262 (KKLLPPYGRF…KIIIHHLGQP (153 aa)). Residue 123–130 (LNTGLGKT) participates in ATP binding. A DEAH box motif is present at residues 215 to 218 (DEAH).

This sequence belongs to the DEAD box helicase family. DEAH subfamily.

The catalysed reaction is ATP + H2O = ADP + phosphate + H(+). This chain is Putative ATP-dependent RNA helicase QP509L, found in African swine fever virus (isolate Tick/Malawi/Lil 20-1/1983) (ASFV).